The sequence spans 471 residues: Threonine--tRNA ligase catalytic subunit (471 aa).

Positions 8–333 are catalytic; it reads THIDYAYELD…YLEHRRGRMP (326 aa). Zn(2+) contacts are provided by cysteine 112, histidine 166, and histidine 310.

This sequence belongs to the class-II aminoacyl-tRNA synthetase family. As to quaternary structure, homodimer. Probably interacts with its editing subunit. The cofactor is Zn(2+).

The protein localises to the cytoplasm. It carries out the reaction tRNA(Thr) + L-threonine + ATP = L-threonyl-tRNA(Thr) + AMP + diphosphate + H(+). Functionally, catalyzes the attachment of threonine to tRNA(Thr) in a two-step reaction: L-threonine is first activated by ATP to form Thr-AMP and then transferred to the acceptor end of tRNA(Thr). This protein is probably not able to deacylate mischarged L-seryl-tRNA(Thr) as it lacks the appropriate domain. The sequence is that of Threonine--tRNA ligase catalytic subunit from Aeropyrum pernix (strain ATCC 700893 / DSM 11879 / JCM 9820 / NBRC 100138 / K1).